A 134-amino-acid polypeptide reads, in one-letter code: MSWQTYVDDHLMCDIEGHEGHRLTAAAIVGHDGSVWAQSATFPQFKPEEMNGIMTDFNEPGHLAPTGLHLGGTKYMVIQGEAGAVIRGKKGSGGITIKKTGQALVFGIYEEPVTPGQCNMVVERLGDYLLEQGM.

A disulfide bond links C13 and C118. The Involved in PIP2 interaction signature appears at A84 to T100. The residue at position 114 (T114) is a Phosphothreonine.

Belongs to the profilin family. In terms of assembly, occurs in many kinds of cells as a complex with monomeric actin in a 1:1 ratio. In terms of processing, phosphorylated by MAP kinases.

The protein localises to the cytoplasm. Its subcellular location is the cytoskeleton. In terms of biological role, binds to actin and affects the structure of the cytoskeleton. At high concentrations, profilin prevents the polymerization of actin, whereas it enhances it at low concentrations. This Olea europaea (Common olive) protein is Profilin-3.